Here is a 280-residue protein sequence, read N- to C-terminus: Mitochondrial outer membrane protein porin 2 (280 aa).

It belongs to the eukaryotic mitochondrial porin (TC 1.B.8.1) family. In terms of tissue distribution, expressed in roots, stems, leaves, palea, lemma and pollen.

Its subcellular location is the mitochondrion outer membrane. Forms a channel through the mitochondrial outer membrane that allows diffusion of small hydrophilic molecules. The channel adopts an open conformation at low or zero membrane potential and a closed conformation at potentials above 30-40 mV. The open state has a weak anion selectivity whereas the closed state is cation-selective. The chain is Mitochondrial outer membrane protein porin 2 (VDAC2) from Oryza sativa subsp. japonica (Rice).